Reading from the N-terminus, the 342-residue chain is Ribosomal RNA small subunit methyltransferase C (342 aa).

This sequence belongs to the methyltransferase superfamily. RsmC family. As to quaternary structure, monomer.

Its subcellular location is the cytoplasm. The enzyme catalyses guanosine(1207) in 16S rRNA + S-adenosyl-L-methionine = N(2)-methylguanosine(1207) in 16S rRNA + S-adenosyl-L-homocysteine + H(+). Its function is as follows. Specifically methylates the guanine in position 1207 of 16S rRNA in the 30S particle. The sequence is that of Ribosomal RNA small subunit methyltransferase C from Shewanella piezotolerans (strain WP3 / JCM 13877).